We begin with the raw amino-acid sequence, 620 residues long: Glutathione-regulated potassium-efflux system protein KefC (620 aa).

The next 12 helical transmembrane spans lie at 4 to 24 (HTLI…PIAV), 26 to 46 (LGLG…PWGL), 54 to 74 (SILH…GLEL), 90 to 110 (GALQ…LLGL), 114 to 134 (VAEL…MQAM), 149 to 169 (FAVL…IPLL), 178 to 198 (MGAF…VVLL), 218 to 238 (VFSA…EEVG), 270 to 290 (GLLL…GTLL), 294 to 314 (LRIV…LWLI), 327 to 347 (WFAV…GAAQ), and 359 to 379 (SLTL…VILN). Positions 399–518 (QPRVIIAGFG…AGVEKPERET (120 aa)) constitute an RCK N-terminal domain. A disordered region spans residues 597–620 (GWQGTEEGKHTGNMADEPETKPSS).

Belongs to the monovalent cation:proton antiporter 2 (CPA2) transporter (TC 2.A.37) family. KefC subfamily. In terms of assembly, homodimer. Interacts with the regulatory subunit KefF.

The protein localises to the cell inner membrane. Its function is as follows. Pore-forming subunit of a potassium efflux system that confers protection against electrophiles. Catalyzes K(+)/H(+) antiport. In Escherichia coli O8 (strain IAI1), this protein is Glutathione-regulated potassium-efflux system protein KefC.